Reading from the N-terminus, the 950-residue chain is 2-oxoglutarate dehydrogenase E1 component (950 aa).

It belongs to the alpha-ketoglutarate dehydrogenase family. Homodimer. Part of the 2-oxoglutarate dehydrogenase (OGDH) complex composed of E1 (2-oxoglutarate dehydrogenase), E2 (dihydrolipoamide succinyltransferase) and E3 (dihydrolipoamide dehydrogenase); the complex contains multiple copies of the three enzymatic components (E1, E2 and E3). Thiamine diphosphate is required as a cofactor.

It carries out the reaction N(6)-[(R)-lipoyl]-L-lysyl-[protein] + 2-oxoglutarate + H(+) = N(6)-[(R)-S(8)-succinyldihydrolipoyl]-L-lysyl-[protein] + CO2. In terms of biological role, E1 component of the 2-oxoglutarate dehydrogenase (OGDH) complex which catalyzes the decarboxylation of 2-oxoglutarate, the first step in the conversion of 2-oxoglutarate to succinyl-CoA and CO(2). The sequence is that of 2-oxoglutarate dehydrogenase E1 component (odhA) from Cupriavidus necator (strain ATCC 17699 / DSM 428 / KCTC 22496 / NCIMB 10442 / H16 / Stanier 337) (Ralstonia eutropha).